Consider the following 2222-residue polypeptide: Voltage-dependent R-type calcium channel subunit alpha-1E (2222 aa).

Residues 1–40 lie on the Cytoplasmic side of the membrane; sequence MALYNPIPVRQNCFTVNRSLFIFGEDNIVRKYAKKLIDWP. Residues 27 to 305 form an I repeat; sequence NIVRKYAKKL…LVLGVLSGEF (279 aa). Residues 41–59 form a helical membrane-spanning segment; it reads PFEYMILATIIANCIVLAL. Over 60–78 the chain is Extracellular; the sequence is EQHLPEDDKTPMSRRLEKT. The chain crosses the membrane as a helical span at residues 79-97; it reads EPYFIGIFCFEAGIKIVAL. Over 98-109 the chain is Cytoplasmic; it reads GFIFHKGSYLRN. The chain crosses the membrane as a helical span at residues 110–124; it reads GWNVMDFIVVLSGIL. At 125–136 the chain is on the extracellular side; it reads ATAGTHFNTHVD. Residues 137 to 156 traverse the membrane as a helical segment; sequence LRTLRAVRVLRPLKLVSGIP. The Cytoplasmic portion of the chain corresponds to 157-174; that stretch reads SLQIVLKSIMKAMVPLLQ. Residues 175-195 form a helical membrane-spanning segment; sequence IGLLLFFAILMFAIIGLEFYS. At 196-277 the chain is on the extracellular side; it reads GKLHRACFMN…NTNDALGATW (82 aa). N-linked (GlcNAc...) asparagine glycosylation is present at asparagine 205. A helical transmembrane segment spans residues 278 to 301; sequence NWLYFIPLIIIGSFFVLNLVLGVL. The Cytoplasmic segment spans residues 302-427; that stretch reads SGEFAKERER…ISIRHMVKSQ (126 aa). Positions 325 to 342 are binding to the beta subunit; the sequence is QQIERELNGYRAWIDKAE. Aspartate 377 contributes to the Ca(2+) binding site. At serine 378 the chain carries Phosphoserine. 3 residues coordinate Ca(2+): serine 379, glutamate 381, and cysteine 383. Threonine 391 bears the Phosphothreonine mark. One copy of the II repeat lies at 413–657; it reads ERLLRISIRH…VFLAIAVDNL (245 aa). A helical transmembrane segment spans residues 428–447; sequence VFYWIVLSVVALNTACVAIV. Residues 448-460 are Extracellular-facing; sequence HHNQPQWLTHLLY. Residues 461–480 form a helical membrane-spanning segment; sequence YAEFLFLGLFLLEMSLKMYG. The Cytoplasmic segment spans residues 481-489; it reads MGPRLYFHS. A helical membrane pass occupies residues 490–508; that stretch reads SFNCFDFGVTVGSIFEVVW. The Extracellular portion of the chain corresponds to 509-518; that stretch reads AIFRPGTSFG. A helical transmembrane segment spans residues 519–537; it reads ISVLRALRLLRIFKITKYW. Residues 538-556 are Cytoplasmic-facing; that stretch reads ASLRNLVVSLMSSMKSIIS. Residues 557–576 traverse the membrane as a helical segment; it reads LLFLLFLFIVVFALLGMQLF. The Extracellular segment spans residues 577–629; the sequence is GGRFNFNDGTPSANFDTFPAAIMTVFQILTGEDWNEVMYNGIRSQGGVSSGMW. The chain crosses the membrane as a helical span at residues 630 to 654; it reads SAIYFIVLTLFGNYTLLNVFLAIAV. At 655-1100 the chain is on the cytoplasmic side; sequence DNLANAQELT…TNPIRKACHY (446 aa). The tract at residues 680–727 is disordered; it reads LQKAKEVSPMSAPNMPSIERDRRRRHHMSMWEPRSSHLRERRRRHHMS. Residues serine 687, serine 696, serine 744, serine 766, and serine 806 each carry the phosphoserine modification. Disordered stretches follow at residues 820–944 and 1042–1076; these read NQRS…VPRG and NKTD…RETG. Residues 864-877 are compositionally biased toward basic residues; the sequence is RHRQSQRRSRHRRV. The span at 884–896 shows a compositional bias: low complexity; sequence SASASRSRSASQE. Residue serine 898 is modified to Phosphoserine. 2 stretches are compositionally biased toward basic and acidic residues: residues 906–935 and 1044–1055; these read DGEK…DLRR and TDGEASPLKEAE. Serine 1049 bears the Phosphoserine mark. The III repeat unit spans residues 1092 to 1378; sequence NPIRKACHYI…IFVALIIITF (287 aa). A helical transmembrane segment spans residues 1101 to 1117; the sequence is IVNLRYFEMCILLVIAA. The Extracellular segment spans residues 1118-1141; that stretch reads SSIALAAEDPVLTNSERNKVLRYF. The chain crosses the membrane as a helical span at residues 1142–1161; that stretch reads DYVFTGVFTFEMVIKMIDQG. Residues 1162–1169 are Cytoplasmic-facing; the sequence is LILQDGSY. Residues 1170 to 1192 traverse the membrane as a helical segment; it reads FRDLWNILDFVVVVGALVAFALA. The Extracellular portion of the chain corresponds to 1193 to 1206; it reads NALGTNKGRDIKTI. Residues 1207-1224 traverse the membrane as a helical segment; that stretch reads KSLRVLRVLRPLKTIKRL. Over 1225–1243 the chain is Cytoplasmic; that stretch reads PKLKAVFDCVVTSLKNVFN. Residues 1244-1263 traverse the membrane as a helical segment; it reads ILIVYKLFMFIFAVIAVQLF. Topologically, residues 1264 to 1350 are extracellular; the sequence is KGKFFYCTDS…RGPSRSNRME (87 aa). Residues 1351–1374 form a helical membrane-spanning segment; that stretch reads MSIFYVVYFVVFPFFFVNIFVALI. The Cytoplasmic portion of the chain corresponds to 1375–1431; sequence IITFQEQGDKMMEECSLEKNERACIDFAISAKPLTRYMPQNRHTFQYRVWHFVVSPS. An IV repeat occupies 1415–1678; it reads NRHTFQYRVW…LFVAVIMDNF (264 aa). Residues 1432 to 1450 traverse the membrane as a helical segment; sequence FEYTIMAMIALNTVVLMMK. Residues 1451–1467 are Extracellular-facing; sequence YYSAPWTYELALKYLNI. Residues 1468-1485 traverse the membrane as a helical segment; that stretch reads AFTMVFSLECVLKVIAFG. Residues 1486–1493 lie on the Cytoplasmic side of the membrane; it reads FLNYFRDT. A helical transmembrane segment spans residues 1494 to 1512; sequence WNIFDFITVIGSITEIILT. At 1513–1523 the chain is on the extracellular side; the sequence is DSKLVNTSGFN. Residues asparagine 1518 and asparagine 1523 are each glycosylated (N-linked (GlcNAc...) asparagine). The chain crosses the membrane as a helical span at residues 1524–1542; the sequence is MSFLKLFRAARLIKLLRQG. At 1543-1561 the chain is on the cytoplasmic side; the sequence is YTIRILLWTFVQSFKALPY. Residues 1562-1581 traverse the membrane as a helical segment; that stretch reads VCLLIAMLFFIYAIIGMQVF. Topologically, residues 1582–1650 are extracellular; the sequence is GNIKLDEESH…NESERCGTDL (69 aa). Asparagine 1641 is a glycosylation site (N-linked (GlcNAc...) asparagine). The chain crosses the membrane as a helical span at residues 1651-1676; it reads AYVYFVSFIFFCSFLMLNLFVAVIMD. Residues 1677 to 2222 are Cytoplasmic-facing; it reads NFEYLTRDSS…LSDTEEDDKC (546 aa). In terms of domain architecture, EF-hand spans 1691 to 1726; that stretch reads HHLDEFVRVWAEYDRAACGRIHYTEMYEMLTLMSPP. Ca(2+) contacts are provided by aspartate 1704, arginine 1710, and glutamate 1715. Positions 1970–2135 are disordered; the sequence is SAHRLNSDSG…QQGQHPSPQH (166 aa). Basic and acidic residues predominate over residues 1974–1994; sequence LNSDSGHKSDTHRSGGRERGR. Residues serine 2003 and serine 2022 each carry the phosphoserine modification. Basic and acidic residues predominate over residues 2010–2027; the sequence is NSEERGTQADWESPERRQ. Low complexity predominate over residues 2046–2061; the sequence is SLSESSIPSISDTSTP. Over residues 2104 to 2123 the composition is skewed to polar residues; sequence LASQALESNSACLTESSNSL. A compositionally biased stretch (low complexity) spans 2124 to 2135; it reads HPQQGQHPSPQH.

Belongs to the calcium channel alpha-1 subunit (TC 1.A.1.11) family. CACNA1E subfamily. As to quaternary structure, interacts with EFHC1. Voltage-dependent calcium channels are multisubunit complexes, consisting of alpha-1, alpha-2, beta and delta subunits in a 1:1:1:1 ratio. The channel activity is directed by the pore-forming and voltage-sensitive alpha-1 subunit. In many cases, this subunit is sufficient to generate voltage-sensitive calcium channel activity. The auxiliary subunits beta and alpha-2/delta linked by a disulfide bridge regulate the channel activity. In terms of tissue distribution, expressed in central nervous system and in insulinoma.

The protein resides in the membrane. It catalyses the reaction Ca(2+)(in) = Ca(2+)(out). Its function is as follows. Voltage-sensitive calcium channels (VSCC) mediate the entry of calcium ions into excitable cells and are also involved in a variety of calcium-dependent processes, including muscle contraction, hormone or neurotransmitter release, gene expression, cell motility, cell division and cell death. The isoform alpha-1E gives rise to R-type calcium currents. R-type calcium channels belong to the 'high-voltage activated' (HVA) group and are blocked by nickel. They are however insensitive to dihydropyridines (DHP). Calcium channels containing alpha-1E subunit could be involved in the modulation of firing patterns of neurons which is important for information processing. The polypeptide is Voltage-dependent R-type calcium channel subunit alpha-1E (Cacna1e) (Rattus norvegicus (Rat)).